Reading from the N-terminus, the 861-residue chain is DNA primase (861 aa).

A CHC2-type zinc finger spans residues 805–843 (CLTRNHKGNRENVLVYLEFKVDNNRILIILWSKCFTTKC).

It belongs to the herpesviridae DNA primase family. Associates with the helicase and the primase-associated factor to form the helicase-primase factor.

It localises to the host nucleus. Functionally, essential component of the helicase/primase complex. Unwinds the DNA at the replication forks and generates single-stranded DNA for both leading and lagging strand synthesis. The primase initiates primer synthesis and thereby produces large amount of short RNA primers on the lagging strand that the polymerase elongates using dNTPs. This Human herpesvirus 7 (strain JI) (HHV-7) protein is DNA primase (U43).